A 636-amino-acid polypeptide reads, in one-letter code: MDIIKKIKKSKSLWAILPSLNATDIEEALSVSSEYYHNTGTSLISDQEYDILMDRLKELNPSSKIFAQVGAPVKGKKVKLPFWMGSMNKIKADEKAVNKWLNEYSGPYVISDKLDGISCLLTIKNNKTKLYTRGDGTYGQDITHLLGLINIDIGLLEEIDQDIAIRGELIMSKKNFEKYQEIMANARNMVGGIVNSKPESVNKDHAADVDLIFYEVIKPNDKLSRQLKILKEWGLKVVYYNIYKTFDVNILESVLSERKKKSGYEIDGIIVTDNNKHVRNISGNPSYSFAFKGDTPTIDTVVKRVIWTPSKDGVLVPRIKFKKVRLSNVDLEYTTGFNAKYIVDNKIGSGAIINVVRSGDVIPYITHVVKPAKKPDLPNIEYVWDKNGVNIILADINDNETVIIKRLTKFMRNIGAENISEGITTRLVEAGFDTIPKIINMTEEDFLTIDGFQERLAEKIYNNLQNSLDNLDILTLMDASNIFGRGFGTKKFKKILDVYPNIVNQYTKETDNIWRKKLLDIEGFDTITVNKFLGEMPNFQKFYKVINKTITIKPYISEVNSEGIFQNQTVVFTGFRNADWQKFIENEGGKVSGSVSKNTSLLVYNDGEESSAKYQKAKQLGIKTMTKSSFSKKFEK.

K113 (N6-AMP-lysine intermediate) is an active-site residue. One can recognise a BRCT domain in the interval 560-636; the sequence is NSEGIFQNQT…KSSFSKKFEK (77 aa).

It belongs to the NAD-dependent DNA ligase family.

It catalyses the reaction NAD(+) + (deoxyribonucleotide)n-3'-hydroxyl + 5'-phospho-(deoxyribonucleotide)m = (deoxyribonucleotide)n+m + AMP + beta-nicotinamide D-nucleotide.. Its function is as follows. Catalyzes the formation of phosphodiester linkages between 5'-phosphoryl and 3'-hydroxyl groups in double-stranded DNA using NAD as a coenzyme and as the energy source for the reaction. The sequence is that of DNA ligase from Acanthamoeba polyphaga (Amoeba).